Consider the following 905-residue polypeptide: DNA gyrase subunit A (905 aa).

A Topo IIA-type catalytic domain is found at 35-524; the sequence is IPDVRDGLKP…GEFDQDIEDL (490 aa). The active-site O-(5'-phospho-DNA)-tyrosine intermediate is the tyrosine 123. Positions 551–557 match the GyrA-box motif; that stretch reads QKRGGKG.

The protein belongs to the type II topoisomerase GyrA/ParC subunit family. In terms of assembly, heterotetramer, composed of two GyrA and two GyrB chains. In the heterotetramer, GyrA contains the active site tyrosine that forms a transient covalent intermediate with DNA, while GyrB binds cofactors and catalyzes ATP hydrolysis.

It is found in the cytoplasm. It carries out the reaction ATP-dependent breakage, passage and rejoining of double-stranded DNA.. In terms of biological role, a type II topoisomerase that negatively supercoils closed circular double-stranded (ds) DNA in an ATP-dependent manner to modulate DNA topology and maintain chromosomes in an underwound state. Negative supercoiling favors strand separation, and DNA replication, transcription, recombination and repair, all of which involve strand separation. Also able to catalyze the interconversion of other topological isomers of dsDNA rings, including catenanes and knotted rings. Type II topoisomerases break and join 2 DNA strands simultaneously in an ATP-dependent manner. This Rickettsia prowazekii (strain Madrid E) protein is DNA gyrase subunit A.